The sequence spans 622 residues: Cilia- and flagella-associated protein 206 (622 aa).

Belongs to the CFAP206 family.

Its subcellular location is the cytoplasm. It localises to the cytoskeleton. The protein resides in the cilium axoneme. It is found in the cilium basal body. Essential for sperm motility and is involved in the regulation of the beating frequency of motile cilia on the epithelial cells of the respiratory tract. Required for the establishment of radial spokes in sperm flagella. The chain is Cilia- and flagella-associated protein 206 from Bos taurus (Bovine).